Consider the following 235-residue polypeptide: 7-cyano-7-deazaguanine synthase (235 aa).

Position 13–23 (13–23 (FSGGLDSTTCL)) interacts with ATP. Zn(2+)-binding residues include C197, C207, C210, and C213.

It belongs to the QueC family. Zn(2+) serves as cofactor.

The catalysed reaction is 7-carboxy-7-deazaguanine + NH4(+) + ATP = 7-cyano-7-deazaguanine + ADP + phosphate + H2O + H(+). The protein operates within purine metabolism; 7-cyano-7-deazaguanine biosynthesis. Its function is as follows. Catalyzes the ATP-dependent conversion of 7-carboxy-7-deazaguanine (CDG) to 7-cyano-7-deazaguanine (preQ(0)). This chain is 7-cyano-7-deazaguanine synthase, found in Solidesulfovibrio magneticus (strain ATCC 700980 / DSM 13731 / RS-1) (Desulfovibrio magneticus).